The primary structure comprises 427 residues: Enolase (427 aa).

Gln163 contacts (2R)-2-phosphoglycerate. Catalysis depends on Glu205, which acts as the Proton donor. Mg(2+) is bound by residues Asp242, Glu285, and Asp312. (2R)-2-phosphoglycerate-binding residues include Lys337, Arg366, Ser367, and Lys388. Lys337 acts as the Proton acceptor in catalysis.

This sequence belongs to the enolase family. It depends on Mg(2+) as a cofactor.

It localises to the cytoplasm. It is found in the secreted. The protein resides in the cell surface. It catalyses the reaction (2R)-2-phosphoglycerate = phosphoenolpyruvate + H2O. It functions in the pathway carbohydrate degradation; glycolysis; pyruvate from D-glyceraldehyde 3-phosphate: step 4/5. Catalyzes the reversible conversion of 2-phosphoglycerate (2-PG) into phosphoenolpyruvate (PEP). It is essential for the degradation of carbohydrates via glycolysis. This chain is Enolase, found in Nitrosospira multiformis (strain ATCC 25196 / NCIMB 11849 / C 71).